A 988-amino-acid chain; its full sequence is Squamosa promoter-binding-like protein 16 (988 aa).

The segment at 52-79 (GTPVDLTRPSKKVRSGSPGSGGGGGGNY) is disordered. Residues 69 to 78 (PGSGGGGGGN) show a composition bias toward gly residues. Residues 79–156 (YPKCQVDNCK…DGHNRRRRKT (78 aa)) form an SBP-type zinc finger. 8 residues coordinate Zn(2+): Cys-82, Cys-87, Cys-104, His-107, Cys-123, Cys-126, His-130, and Cys-142. The short motif at 139 to 155 (KRSCRRRLDGHNRRRRK) is the Bipartite nuclear localization signal element. Disordered stretches follow at residues 240–262 (RKNP…SSPS) and 289–416 (GFGN…DTST). Polar residues-rich tracts occupy residues 250–262 (NPQN…SSPS), 301–311 (LTSSDHSATTS), and 327–358 (RTSS…FTSS). Over residues 368–379 (ASSTKYYSSASS) the composition is skewed to low complexity.

It depends on Zn(2+) as a cofactor.

The protein resides in the nucleus. Functionally, trans-acting factor that binds specifically to the consensus nucleotide sequence 5'-TNCGTACAA-3'. In Arabidopsis thaliana (Mouse-ear cress), this protein is Squamosa promoter-binding-like protein 16 (SPL16).